The following is a 198-amino-acid chain: Recombination protein RecR (198 aa).

The segment at 57-72 (CSVCGHITDKDPCYIC) adopts a C4-type zinc-finger fold. Residues 80–175 (SVLCVVQESK…KVTRIAHGLP (96 aa)) form the Toprim domain.

The protein belongs to the RecR family.

In terms of biological role, may play a role in DNA repair. It seems to be involved in an RecBC-independent recombinational process of DNA repair. It may act with RecF and RecO. The polypeptide is Recombination protein RecR (Listeria innocua serovar 6a (strain ATCC BAA-680 / CLIP 11262)).